The following is a 202-amino-acid chain: LexA repressor (202 aa).

Residues 28–48 (IAEIARAIGVSSPHGVREQLR) constitute a DNA-binding region (H-T-H motif). Residues Ser-120 and Lys-157 each act as for autocatalytic cleavage activity in the active site.

The protein belongs to the peptidase S24 family. Homodimer.

It carries out the reaction Hydrolysis of Ala-|-Gly bond in repressor LexA.. Represses a number of genes involved in the response to DNA damage (SOS response), including recA and lexA. In the presence of single-stranded DNA, RecA interacts with LexA causing an autocatalytic cleavage which disrupts the DNA-binding part of LexA, leading to derepression of the SOS regulon and eventually DNA repair. In Methylococcus capsulatus (strain ATCC 33009 / NCIMB 11132 / Bath), this protein is LexA repressor.